A 204-amino-acid polypeptide reads, in one-letter code: 3-isopropylmalate dehydratase small subunit (204 aa).

Belongs to the LeuD family. LeuD type 1 subfamily. As to quaternary structure, heterodimer of LeuC and LeuD.

The catalysed reaction is (2R,3S)-3-isopropylmalate = (2S)-2-isopropylmalate. It participates in amino-acid biosynthesis; L-leucine biosynthesis; L-leucine from 3-methyl-2-oxobutanoate: step 2/4. In terms of biological role, catalyzes the isomerization between 2-isopropylmalate and 3-isopropylmalate, via the formation of 2-isopropylmaleate. This is 3-isopropylmalate dehydratase small subunit from Psychromonas ingrahamii (strain DSM 17664 / CCUG 51855 / 37).